The following is a 102-amino-acid chain: ATP-dependent Clp protease adapter protein ClpS (102 aa).

This sequence belongs to the ClpS family. In terms of assembly, binds to the N-terminal domain of the chaperone ClpA.

In terms of biological role, involved in the modulation of the specificity of the ClpAP-mediated ATP-dependent protein degradation. The protein is ATP-dependent Clp protease adapter protein ClpS of Shewanella putrefaciens (strain CN-32 / ATCC BAA-453).